A 240-amino-acid polypeptide reads, in one-letter code: Transcriptional regulatory protein ResD (240 aa).

One can recognise a Response regulatory domain in the interval K8 to L121. D57 bears the 4-aspartylphosphate mark. The ompR/PhoB-type DNA-binding region spans K137–V237.

In terms of assembly, interacts with the RNA polymerase core. In terms of processing, phosphorylated by ResE.

It is found in the cytoplasm. Member of the two-component regulatory system ResD/ResE. Required for the expression of resA, ctaA, qcrABC and fnr; activation role in global regulation of aerobic and anaerobic respiration. This chain is Transcriptional regulatory protein ResD (resD), found in Bacillus subtilis (strain 168).